The primary structure comprises 527 residues: Type-2 serine--tRNA ligase (527 aa).

Residue Ala-317 participates in L-serine binding. Cys-319 is a binding site for Zn(2+). Arg-349 lines the L-serine pocket. ATP-binding positions include Arg-349–Glu-351 and Arg-360–Val-361. Arg-366–Glu-368 contributes to the L-serine binding site. Residues Glu-368 and Cys-478 each coordinate Zn(2+). Arg-485 lines the ATP pocket.

Belongs to the class-II aminoacyl-tRNA synthetase family. Type-2 seryl-tRNA synthetase subfamily. Homodimer. The cofactor is Zn(2+).

Its subcellular location is the cytoplasm. The enzyme catalyses tRNA(Ser) + L-serine + ATP = L-seryl-tRNA(Ser) + AMP + diphosphate + H(+). It catalyses the reaction tRNA(Sec) + L-serine + ATP = L-seryl-tRNA(Sec) + AMP + diphosphate + H(+). Its pathway is aminoacyl-tRNA biosynthesis; selenocysteinyl-tRNA(Sec) biosynthesis; L-seryl-tRNA(Sec) from L-serine and tRNA(Sec): step 1/1. In terms of biological role, catalyzes the attachment of serine to tRNA(Ser). Is also able to aminoacylate tRNA(Sec) with serine, to form the misacylated tRNA L-seryl-tRNA(Sec), which will be further converted into selenocysteinyl-tRNA(Sec). This chain is Type-2 serine--tRNA ligase, found in Methanopyrus kandleri (strain AV19 / DSM 6324 / JCM 9639 / NBRC 100938).